The following is a 646-amino-acid chain: MHDFVSHILRQYFHATNWNEYNSYLHLTSCSSAILDFCVPTGLSLSISASPTPPFFTTYRLGALPNLRAGIGYIYASTDSKIDFGGSSKDVRLKEIIERFRIVEARAPAAFKSKEKEKEYYWLAGDRYPEQEALGDLGKKERGGGEYLVYGCMHVPSARLDALWTKRISPTWQLIVTAVSSPPRYPLNALQNAAIASRSAYSTGAKSTSSSMDRLDSSNPSLSSSTSLSNTGASTAATTAAAAAAAAAAQDTYGLGPPGSTNLQFTLQRDTGRWFTEYSYSIDDALWGFRVLHNFGTPADTASTTLAALSEGAVETSSSASYPQRNGSVLHTGSSSSSEDTEAGGGLRGRFSAGAEVFISTVEKSAGLSTGIRFSTLPDTPQQPLMIAPSFDSSPSPHQASTLASAPSQPPTVITATLNPMMGHLSTAYAARMARDVVVCSRFDFNVYSYESEWTMGAEYWLRKSGGGGGVESVEASDADVPAPMNRIGSTSSIGGLRGHDETRQARFQEEHAMSLREASEAVSQVDGNTGDGGTSVFGLLRDPPALAPSAPSPRATCANSTLSHLLSPITGVLKARISSTSDIRLLWQGRLSHCLVSLGVKADLSGTHGASYSVGGAPASPKMGIVKSIGLEVMYFSQAEDESVE.

2 disordered regions span residues 206 to 230 (KSTSSSMDRLDSSNPSLSSSTSLSN) and 315 to 347 (ETSSSASYPQRNGSVLHTGSSSSSEDTEAGGGL). Residues 207 to 230 (STSSSMDRLDSSNPSLSSSTSLSN) are compositionally biased toward low complexity. A compositionally biased stretch (polar residues) spans 315–333 (ETSSSASYPQRNGSVLHTG).

Belongs to the MDM10 family. Component of the ER-mitochondria encounter structure (ERMES) or MDM complex, composed of MMM1, MDM10, MDM12 and MDM34. Associates with the mitochondrial outer membrane sorting assembly machinery SAM(core) complex.

It localises to the mitochondrion outer membrane. Its function is as follows. Component of the ERMES/MDM complex, which serves as a molecular tether to connect the endoplasmic reticulum and mitochondria. Components of this complex are involved in the control of mitochondrial shape and protein biogenesis and may function in phospholipid exchange. MDM10 is involved in the late assembly steps of the general translocase of the mitochondrial outer membrane (TOM complex). Functions in the TOM40-specific route of the assembly of outer membrane beta-barrel proteins, including the association of TOM40 with the receptor TOM22 and small TOM proteins. Can associate with the SAM(core) complex as well as the MDM12-MMM1 complex, both involved in late steps of the major beta-barrel assembly pathway, that is responsible for biogenesis of all outer membrane beta-barrel proteins. May act as a switch that shuttles between both complexes and channels precursor proteins into the TOM40-specific pathway. Plays a role in mitochondrial morphology and in the inheritance of mitochondria. In Mycosarcoma maydis (Corn smut fungus), this protein is Mitochondrial distribution and morphology protein 10.